A 764-amino-acid chain; its full sequence is FAST kinase domain-containing protein 5, mitochondrial (764 aa).

A mitochondrion-targeting transit peptide spans 1-27 (MAATLKSLKLLRYQAFCSPSAFGAVRS). Residues 68–94 (IPTTSSARPGLEFSKTSSSKASTLQLG) form a disordered region. Over residues 81–93 (SKTSSSKASTLQL) the composition is skewed to polar residues. The residue at position 95 (Ser-95) is a Phosphoserine. The residue at position 507 (Lys-507) is an N6-acetyllysine. Residues 697–757 (LAIQFTNRNQ…RLEKLAFLHE (61 aa)) enclose the RAP domain.

The protein belongs to the FAST kinase family. In terms of assembly, found in a complex with GRSF1, DDX28, DHX30 and FASTKD2. Associates with the 12S mitochondrial rRNA (12S mt-rRNA).

It is found in the mitochondrion matrix. The protein localises to the mitochondrion nucleoid. In terms of biological role, plays an important role in the processing of non-canonical mitochondrial mRNA precursors. This chain is FAST kinase domain-containing protein 5, mitochondrial (FASTKD5), found in Pongo abelii (Sumatran orangutan).